A 168-amino-acid chain; its full sequence is Protein FAM163A (168 aa).

The helical transmembrane segment at 6–26 (VVITGGILATVILLCIIAVLC) threads the bilayer.

Belongs to the FAM163 family.

Its subcellular location is the membrane. This Mus musculus (Mouse) protein is Protein FAM163A (Fam163a).